Here is a 326-residue protein sequence, read N- to C-terminus: Protein TMED8 (326 aa).

The disordered stretch occupies residues 1–80 (MSDLQAAEGP…VSPGSKDATE (80 aa)). The 165-residue stretch at 160-324 (PPCIWTFAKV…NKTLYFHIYY (165 aa)) folds into the GOLD domain. Lysine 170 is modified (N6-acetyllysine). The segment at 238–268 (DSCDDEDEEEEEEEEIEEPVPAGDVERGSRS) is disordered. A compositionally biased stretch (acidic residues) spans 239 to 255 (SCDDEDEEEEEEEEIEE).

In Pongo abelii (Sumatran orangutan), this protein is Protein TMED8 (TMED8).